The chain runs to 78 residues: Translation initiation factor IF-1, chloroplastic (78 aa).

An S1-like domain is found at 1-72 (MKKQNLIDME…TKGRITYRLR (72 aa)).

It belongs to the IF-1 family. As to quaternary structure, component of the 30S ribosomal translation pre-initiation complex which assembles on the 30S ribosome in the order IF-2 and IF-3, IF-1 and N-formylmethionyl-tRNA(fMet); mRNA recruitment can occur at any time during PIC assembly.

The protein localises to the plastid. It localises to the chloroplast. Its function is as follows. One of the essential components for the initiation of protein synthesis. Stabilizes the binding of IF-2 and IF-3 on the 30S subunit to which N-formylmethionyl-tRNA(fMet) subsequently binds. Helps modulate mRNA selection, yielding the 30S pre-initiation complex (PIC). Upon addition of the 50S ribosomal subunit IF-1, IF-2 and IF-3 are released leaving the mature 70S translation initiation complex. The polypeptide is Translation initiation factor IF-1, chloroplastic (Physcomitrium patens (Spreading-leaved earth moss)).